The chain runs to 415 residues: Putative competence-damage inducible protein (415 aa).

It belongs to the CinA family.

The chain is Putative competence-damage inducible protein from Listeria welshimeri serovar 6b (strain ATCC 35897 / DSM 20650 / CCUG 15529 / CIP 8149 / NCTC 11857 / SLCC 5334 / V8).